The chain runs to 371 residues: Putative phosphoserine aminotransferase (371 aa).

R45 contributes to the L-glutamate binding site. Pyridoxal 5'-phosphate is bound by residues F103, T149, D171, and Q194. K195 bears the N6-(pyridoxal phosphate)lysine mark. 246–247 (NT) provides a ligand contact to pyridoxal 5'-phosphate.

The protein belongs to the class-V pyridoxal-phosphate-dependent aminotransferase family. SerC subfamily. Homodimer. It depends on pyridoxal 5'-phosphate as a cofactor.

It localises to the cytoplasm. The catalysed reaction is O-phospho-L-serine + 2-oxoglutarate = 3-phosphooxypyruvate + L-glutamate. It catalyses the reaction 4-(phosphooxy)-L-threonine + 2-oxoglutarate = (R)-3-hydroxy-2-oxo-4-phosphooxybutanoate + L-glutamate. It participates in amino-acid biosynthesis; L-serine biosynthesis; L-serine from 3-phospho-D-glycerate: step 2/3. It functions in the pathway cofactor biosynthesis; pyridoxine 5'-phosphate biosynthesis; pyridoxine 5'-phosphate from D-erythrose 4-phosphate: step 3/5. Its function is as follows. Catalyzes the reversible conversion of 3-phosphohydroxypyruvate to phosphoserine and of 3-hydroxy-2-oxo-4-phosphonooxybutanoate to phosphohydroxythreonine. In Mycolicibacterium vanbaalenii (strain DSM 7251 / JCM 13017 / BCRC 16820 / KCTC 9966 / NRRL B-24157 / PYR-1) (Mycobacterium vanbaalenii), this protein is Putative phosphoserine aminotransferase.